The chain runs to 588 residues: Probable metalloprotease ARX1 (588 aa).

Belongs to the peptidase M24 family. In terms of assembly, component of the nucleoplasmic and cytoplasmic pre-60S ribosomal particles.

It localises to the cytoplasm. The protein localises to the nucleus. Its function is as follows. Probable metalloprotease involved in proper assembly of pre-ribosomal particles during the biogenesis of the 60S ribosomal subunit. Accompanies the pre-60S particles to the cytoplasm. This is Probable metalloprotease ARX1 (ARX1) from Candida glabrata (strain ATCC 2001 / BCRC 20586 / JCM 3761 / NBRC 0622 / NRRL Y-65 / CBS 138) (Yeast).